Here is a 461-residue protein sequence, read N- to C-terminus: Transcription factor SOX-10 (461 aa).

Disordered regions lie at residues 1-60, 154-191, 205-268, 350-369, and 433-461; these read MADD…ADDD, LRMQHKKDHPDYKYQPRRRKNGKATQGEGEGQVEGEAG, LDHR…DFGN, KAQVKTEGSAPGGHYTDQPS, and AISDPAPSVPQSHSPTHWEQPVYTTLSRP. Residues 30–42 are compositionally biased toward polar residues; sequence ASDNSSHLASSGN. The segment at 56-96 is dimerization (DIM); that stretch reads EADDDKFPVCIREAVSQVLSGYDWTLVPMPVRVNGSNKSKP. The segment at residues 98-166 is a DNA-binding region (HMG box); that stretch reads VKRPMNAFMV…QHKKDHPDYK (69 aa). Residues 154 to 167 show a composition bias toward basic and acidic residues; it reads LRMQHKKDHPDYKY. The segment covering 181 to 191 has biased composition (gly residues); that stretch reads EGEGQVEGEAG. The interval 221–306 is transactivation domain (TAM); the sequence is PEHSSGQSHG…NGHAGHPGHV (86 aa). Residues 247–264 show a composition bias toward basic and acidic residues; sequence ADSKREGRSLGEGGKPHI. The interval 350–461 is transactivation domain (TAC); the sequence is KAQVKTEGSA…QPVYTTLSRP (112 aa). Over residues 441-461 the composition is skewed to polar residues; it reads VPQSHSPTHWEQPVYTTLSRP.

It is found in the cytoplasm. The protein resides in the nucleus. Its function is as follows. Transcription factor that plays a central role in developing and mature glia. Specifically activates expression of myelin genes, during oligodendrocyte (OL) maturation, thereby playing a central role in oligodendrocyte maturation and CNS myelination. The polypeptide is Transcription factor SOX-10 (SOX10) (Gallus gallus (Chicken)).